We begin with the raw amino-acid sequence, 395 residues long: Acetylornithine aminotransferase (395 aa).

Pyridoxal 5'-phosphate contacts are provided by residues 117–118 and phenylalanine 144; that span reads GA. Arginine 147 contributes to the N(2)-acetyl-L-ornithine binding site. 230–233 is a pyridoxal 5'-phosphate binding site; sequence DEVQ. The residue at position 259 (lysine 259) is an N6-(pyridoxal phosphate)lysine. Residue serine 285 coordinates N(2)-acetyl-L-ornithine. Pyridoxal 5'-phosphate is bound at residue threonine 286.

This sequence belongs to the class-III pyridoxal-phosphate-dependent aminotransferase family. ArgD subfamily. Homodimer. Pyridoxal 5'-phosphate is required as a cofactor.

The protein resides in the cytoplasm. It carries out the reaction N(2)-acetyl-L-ornithine + 2-oxoglutarate = N-acetyl-L-glutamate 5-semialdehyde + L-glutamate. Its pathway is amino-acid biosynthesis; L-arginine biosynthesis; N(2)-acetyl-L-ornithine from L-glutamate: step 4/4. This chain is Acetylornithine aminotransferase, found in Methanosarcina mazei (strain ATCC BAA-159 / DSM 3647 / Goe1 / Go1 / JCM 11833 / OCM 88) (Methanosarcina frisia).